We begin with the raw amino-acid sequence, 184 residues long: Peptide methionine sulfoxide reductase (184 aa).

Serine 58 carries the phosphoserine modification.

Belongs to the MsrA Met sulfoxide reductase family.

The catalysed reaction is L-methionyl-[protein] + [thioredoxin]-disulfide + H2O = L-methionyl-(S)-S-oxide-[protein] + [thioredoxin]-dithiol. The enzyme catalyses [thioredoxin]-disulfide + L-methionine + H2O = L-methionine (S)-S-oxide + [thioredoxin]-dithiol. Functionally, has an important function as a repair enzyme for proteins that have been inactivated by oxidation. Catalyzes the reversible oxidation-reduction of methionine sulfoxide in proteins to methionine. Also able to reduce dimethyl sulfoxide (DMSO) as well, with DMS as the product. The sequence is that of Peptide methionine sulfoxide reductase (MXR1) from Saccharomyces cerevisiae (strain ATCC 204508 / S288c) (Baker's yeast).